Here is a 176-residue protein sequence, read N- to C-terminus: RNA pyrophosphohydrolase (176 aa).

Positions 6-149 constitute a Nudix hydrolase domain; that stretch reads GYRPNVGIVI…KRDVYRRVMK (144 aa). Residues 38–59 carry the Nudix box motif; the sequence is GGINPGESAEQAMYRELFEEVG.

This sequence belongs to the Nudix hydrolase family. RppH subfamily. A divalent metal cation is required as a cofactor.

Accelerates the degradation of transcripts by removing pyrophosphate from the 5'-end of triphosphorylated RNA, leading to a more labile monophosphorylated state that can stimulate subsequent ribonuclease cleavage. In Shigella boydii serotype 18 (strain CDC 3083-94 / BS512), this protein is RNA pyrophosphohydrolase.